The following is a 245-amino-acid chain: 1-(5-phosphoribosyl)-5-[(5-phosphoribosylamino)methylideneamino] imidazole-4-carboxamide isomerase (245 aa).

The active-site Proton acceptor is aspartate 10. Catalysis depends on aspartate 135, which acts as the Proton donor.

Belongs to the HisA/HisF family.

The protein localises to the cytoplasm. The catalysed reaction is 1-(5-phospho-beta-D-ribosyl)-5-[(5-phospho-beta-D-ribosylamino)methylideneamino]imidazole-4-carboxamide = 5-[(5-phospho-1-deoxy-D-ribulos-1-ylimino)methylamino]-1-(5-phospho-beta-D-ribosyl)imidazole-4-carboxamide. It participates in amino-acid biosynthesis; L-histidine biosynthesis; L-histidine from 5-phospho-alpha-D-ribose 1-diphosphate: step 4/9. The chain is 1-(5-phosphoribosyl)-5-[(5-phosphoribosylamino)methylideneamino] imidazole-4-carboxamide isomerase from Methanosarcina barkeri (strain Fusaro / DSM 804).